The sequence spans 111 residues: UPF0060 membrane protein Aave_2845 (111 aa).

A run of 4 helical transmembrane segments spans residues 7-27 (FLLYAVTALAEIAGCYLPWLW), 33-53 (SAWLLVPGAACLALFAWLLTL), 63-83 (AAYGGVYVAVALGWLWAVDGI), and 90-110 (LAGAAVTLAGMAIIAFAPRGA).

This sequence belongs to the UPF0060 family.

It is found in the cell inner membrane. This is UPF0060 membrane protein Aave_2845 from Paracidovorax citrulli (strain AAC00-1) (Acidovorax citrulli).